A 510-amino-acid polypeptide reads, in one-letter code: Inositol-3-phosphate synthase 1 (510 aa).

Residues glycine 70, glycine 71, asparagine 72, asparagine 73, aspartate 143, isoleucine 180, glutamine 190, arginine 193, threonine 230, alanine 231, asparagine 232, threonine 233, glycine 281, serine 282, aspartate 306, serine 309, asparagine 340, asparagine 341, aspartate 342, lysine 355, glycine 393, aspartate 394, aspartate 422, and serine 423 each coordinate NAD(+).

The protein belongs to the myo-inositol 1-phosphate synthase family. Requires NAD(+) as cofactor.

Its subcellular location is the cytoplasm. It localises to the cytosol. It is found in the nucleus. It catalyses the reaction D-glucose 6-phosphate = 1D-myo-inositol 3-phosphate. It participates in polyol metabolism; myo-inositol biosynthesis; myo-inositol from D-glucose 6-phosphate: step 1/2. Key enzyme in myo-inositol biosynthesis pathway that catalyzes the conversion of glucose 6-phosphate to 1-myo-inositol 1-phosphate in a NAD-dependent manner. May play a role in oxidative stress resistance and influences ascorbate levels. In Populus euphratica (Euphrates poplar), this protein is Inositol-3-phosphate synthase 1.